The sequence spans 276 residues: Large ribosomal subunit protein uL2 (276 aa).

The disordered stretch occupies residues 223–276; the sequence is GVAMNPVDHPHGGGEGRGKGHHPTSPWGLPTKGYKTRRGKRPSDKFIVRRRNEA. Composition is skewed to basic and acidic residues over residues 230-240 and 263-276; these read DHPHGGGEGRG and RPSD…RNEA.

The protein belongs to the universal ribosomal protein uL2 family. Part of the 50S ribosomal subunit. Forms a bridge to the 30S subunit in the 70S ribosome.

Its function is as follows. One of the primary rRNA binding proteins. Required for association of the 30S and 50S subunits to form the 70S ribosome, for tRNA binding and peptide bond formation. It has been suggested to have peptidyltransferase activity; this is somewhat controversial. Makes several contacts with the 16S rRNA in the 70S ribosome. The sequence is that of Large ribosomal subunit protein uL2 from Thermotoga petrophila (strain ATCC BAA-488 / DSM 13995 / JCM 10881 / RKU-1).